The following is a 208-amino-acid chain: Ribonuclease HII (208 aa).

The RNase H type-2 domain occupies 17 to 208 (LRVCGIDEAG…SFRLRQLGEK (192 aa)). Aspartate 23, glutamate 24, and aspartate 120 together coordinate a divalent metal cation.

It belongs to the RNase HII family. Mn(2+) is required as a cofactor. It depends on Mg(2+) as a cofactor.

The protein localises to the cytoplasm. It catalyses the reaction Endonucleolytic cleavage to 5'-phosphomonoester.. Functionally, endonuclease that specifically degrades the RNA of RNA-DNA hybrids. The polypeptide is Ribonuclease HII (Chlorobium luteolum (strain DSM 273 / BCRC 81028 / 2530) (Pelodictyon luteolum)).